The following is a 336-amino-acid chain: Holliday junction branch migration complex subunit RuvB (336 aa).

The tract at residues 4 to 184 (ADRLISAGTT…FGIVQRLEFY (181 aa)) is large ATPase domain (RuvB-L). ATP-binding positions include isoleucine 23, arginine 24, glycine 65, lysine 68, threonine 69, threonine 70, 131-133 (EDY), arginine 174, tyrosine 184, and arginine 221. Mg(2+) is bound at residue threonine 69. The small ATPAse domain (RuvB-S) stretch occupies residues 185–255 (QVPDLQYIVS…IAAQALDMLN (71 aa)). Positions 258–336 (AEGFDYMDRK…HFGITPPEMP (79 aa)) are head domain (RuvB-H). DNA contacts are provided by arginine 294, arginine 313, and arginine 318.

The protein belongs to the RuvB family. Homohexamer. Forms an RuvA(8)-RuvB(12)-Holliday junction (HJ) complex. HJ DNA is sandwiched between 2 RuvA tetramers; dsDNA enters through RuvA and exits via RuvB. An RuvB hexamer assembles on each DNA strand where it exits the tetramer. Each RuvB hexamer is contacted by two RuvA subunits (via domain III) on 2 adjacent RuvB subunits; this complex drives branch migration. In the full resolvosome a probable DNA-RuvA(4)-RuvB(12)-RuvC(2) complex forms which resolves the HJ.

It localises to the cytoplasm. The catalysed reaction is ATP + H2O = ADP + phosphate + H(+). Its function is as follows. The RuvA-RuvB-RuvC complex processes Holliday junction (HJ) DNA during genetic recombination and DNA repair, while the RuvA-RuvB complex plays an important role in the rescue of blocked DNA replication forks via replication fork reversal (RFR). RuvA specifically binds to HJ cruciform DNA, conferring on it an open structure. The RuvB hexamer acts as an ATP-dependent pump, pulling dsDNA into and through the RuvAB complex. RuvB forms 2 homohexamers on either side of HJ DNA bound by 1 or 2 RuvA tetramers; 4 subunits per hexamer contact DNA at a time. Coordinated motions by a converter formed by DNA-disengaged RuvB subunits stimulates ATP hydrolysis and nucleotide exchange. Immobilization of the converter enables RuvB to convert the ATP-contained energy into a lever motion, pulling 2 nucleotides of DNA out of the RuvA tetramer per ATP hydrolyzed, thus driving DNA branch migration. The RuvB motors rotate together with the DNA substrate, which together with the progressing nucleotide cycle form the mechanistic basis for DNA recombination by continuous HJ branch migration. Branch migration allows RuvC to scan DNA until it finds its consensus sequence, where it cleaves and resolves cruciform DNA. The chain is Holliday junction branch migration complex subunit RuvB from Shigella sonnei (strain Ss046).